A 352-amino-acid polypeptide reads, in one-letter code: Putative [LysW]-L-2-aminoadipate/[LysW]-L-glutamate phosphate reductase (352 aa).

Residues 10-13 (SGFT) and 34-36 (SRK) contribute to the NADP(+) site. The active site involves C151. N319 lines the NADP(+) pocket.

The protein belongs to the NAGSA dehydrogenase family. Type 1 subfamily. LysY sub-subfamily.

Its subcellular location is the cytoplasm. The enzyme catalyses [amino-group carrier protein]-C-terminal-N-(1-carboxy-5-oxopentan-1-yl)-L-glutamine + phosphate + NADP(+) = [amino-group carrier protein]-C-terminal-N-(1-carboxy-5-phosphooxy-5-oxopentan-1-yl)-L-glutamine + NADPH + H(+). It catalyses the reaction [amino-group carrier protein]-C-terminal-gamma-(L-glutamyl-5-semialdehyde)-L-glutamate + phosphate + NADP(+) = [amino-group carrier protein]-C-terminal-gamma-(5-phospho-L-glutamyl)-L-glutamate + NADPH + H(+). The protein operates within amino-acid biosynthesis; L-lysine biosynthesis via AAA pathway; L-lysine from L-alpha-aminoadipate (Thermus route): step 3/5. It functions in the pathway amino-acid biosynthesis; L-arginine biosynthesis. Functionally, involved in both the arginine and lysine biosynthetic pathways. The chain is Putative [LysW]-L-2-aminoadipate/[LysW]-L-glutamate phosphate reductase from Pyrobaculum neutrophilum (strain DSM 2338 / JCM 9278 / NBRC 100436 / V24Sta) (Thermoproteus neutrophilus).